The primary structure comprises 261 residues: tRNA pseudouridine synthase A (261 aa).

Aspartate 52 functions as the Nucleophile in the catalytic mechanism. Position 110 (tyrosine 110) interacts with substrate.

It belongs to the tRNA pseudouridine synthase TruA family. As to quaternary structure, homodimer.

It carries out the reaction uridine(38/39/40) in tRNA = pseudouridine(38/39/40) in tRNA. Its function is as follows. Formation of pseudouridine at positions 38, 39 and 40 in the anticodon stem and loop of transfer RNAs. The polypeptide is tRNA pseudouridine synthase A (Coxiella burnetii (strain CbuK_Q154) (Coxiella burnetii (strain Q154))).